A 320-amino-acid polypeptide reads, in one-letter code: Heterogeneous nuclear ribonucleoprotein A1 (320 aa).

Position 1 is an N-acetylmethionine (M1). S2 is modified (N-acetylserine; in Heterogeneous nuclear ribonucleoprotein A1, N-terminally processed). A Phosphoserine modification is found at S2. The residue at position 3 (K3) is an N6-acetyllysine; alternate. K3 is covalently cross-linked (Glycyl lysine isopeptide (Lys-Gly) (interchain with G-Cter in SUMO2); alternate). A phosphoserine mark is found at S4 and S6. Positions 4–94 (SESPKEPEQL…EPKRAVSRED (91 aa)) are globular A domain. K8 is covalently cross-linked (Glycyl lysine isopeptide (Lys-Gly) (interchain with G-Cter in SUMO2)). RRM domains are found at residues 14-97 (RKLF…DSQR) and 105-184 (KKIF…LSKQ). S22 is subject to Phosphoserine. A Glycyl lysine isopeptide (Lys-Gly) (interchain with G-Cter in SUMO2) cross-link involves residue K78. The segment at 95 to 185 (SQRPGAHLTV…EVRKALSKQE (91 aa)) is globular B domain. A Glycyl lysine isopeptide (Lys-Gly) (interchain with G-Cter in SUMO) cross-link involves residue K113. Residues K179 and K183 each participate in a glycyl lysine isopeptide (Lys-Gly) (interchain with G-Cter in SUMO2) cross-link. Residues 182-216 (SKQEMASASSSQRGRSGSGNFGGGRGGGFGGNDNF) are disordered. S192 is subject to Phosphoserine; by MKNK2. R194 is subject to Asymmetric dimethylarginine; alternate. Position 194 is a dimethylated arginine; alternate (R194). R194 carries the post-translational modification Omega-N-methylarginine; alternate. Residues 197-216 (SGSGNFGGGRGGGFGGNDNF) are compositionally biased toward gly residues. S199 carries the post-translational modification Phosphoserine. Asymmetric dimethylarginine; alternate is present on residues R206, R218, R225, and R232. R206 is modified (dimethylated arginine; alternate). Residues R206, R218, R225, and R232 each carry the omega-N-methylarginine; alternate modification. An RNA-binding RGG-box region spans residues 218–240 (RGGNFSGRGGFGGSRGGGGYGGS). At R225 the chain carries Dimethylated arginine; alternate. Residues 268-305 (NQSSNFGPMKGGNFGGRSSGPYGGGGQYFAKPRNQGGY) are nuclear targeting sequence. Positions 274–320 (GPMKGGNFGGRSSGPYGGGGQYFAKPRNQGGYGGSSSSSSYGSGRRF) are disordered. Residues 276-294 (MKGGNFGGRSSGPYGGGGQ) are compositionally biased toward gly residues. R284 is modified (omega-N-methylarginine). A Phosphoserine modification is found at S285. N6-acetyllysine; alternate is present on K298. Residue K298 forms a Glycyl lysine isopeptide (Lys-Gly) (interchain with G-Cter in SUMO2); alternate linkage. R300 carries the post-translational modification Omega-N-methylarginine. A compositionally biased stretch (low complexity) spans 308-320 (SSSSSSYGSGRRF). Residue S309 is modified to Phosphoserine. 3 positions are modified to phosphoserine; by MKNK2: S310, S311, and S312. Phosphoserine is present on residues S313 and S316. An Omega-N-methylarginine modification is found at R318.

In terms of assembly, identified in the spliceosome C complex. Identified in a IGF2BP1-dependent mRNP granule complex containing untranslated mRNAs. Interacts with SEPT6. Interacts with C9orf72. Interacts with KHDRBS1. Interacts with UBQLN2. Interacts with PPIA/CYPA. Sumoylated.

The protein localises to the nucleus. It is found in the cytoplasm. Its function is as follows. Involved in the packaging of pre-mRNA into hnRNP particles, transport of poly(A) mRNA from the nucleus to the cytoplasm and modulation of splice site selection. Plays a role in the splicing of pyruvate kinase PKM by binding repressively to sequences flanking PKM exon 9, inhibiting exon 9 inclusion and resulting in exon 10 inclusion and production of the PKM M2 isoform. Binds to the IRES and thereby inhibits the translation of the apoptosis protease activating factor APAF1. May bind to specific miRNA hairpins. The polypeptide is Heterogeneous nuclear ribonucleoprotein A1 (Hnrnpa1) (Mus musculus (Mouse)).